The primary structure comprises 335 residues: Dolichyl-diphosphooligosaccharide--protein glycosyltransferase subunit MAGT1 (335 aa).

Residues 1–29 (MASPRWLWCVCATAAVTLLLVSKVPSASA) form the signal peptide. Residues 30–184 (QRKKEKVLVE…DVNIRVIRPP (155 aa)) lie on the Extracellular side of the membrane. One can recognise a Thioredoxin domain in the interval 47-175 (WTNQRPVIRM…IARWIADRTD (129 aa)). Residue asparagine 71 is glycosylated (N-linked (GlcNAc...) asparagine). Cysteine 87 and cysteine 90 are disulfide-bonded. A helical transmembrane segment spans residues 185–205 (NYAGPLMLGLLLAVIGGLVYL). Topologically, residues 206 to 209 (RRSN) are cytoplasmic. The chain crosses the membrane as a helical span at residues 210 to 230 (MEFLFNKTGWAFAALCFVLAM). Residues 231–270 (TSGQMWNHIRGPPYAHKNPHTGHVNYIHGSSQAQFVAETH) lie on the Extracellular side of the membrane. The chain crosses the membrane as a helical span at residues 271 to 291 (IVLLFNGGVTLGMVLLCEAAA). Over 292–300 (SDMDIGKRR) the chain is Cytoplasmic. A helical membrane pass occupies residues 301–321 (MMCIAGIGLVVLFFSWMLSIF). Residues 322-335 (RSKYHGYPYSFLMS) are Extracellular-facing.

The protein belongs to the OST3/OST6 family. As to quaternary structure, accessory component of the STT3B-containing form of the oligosaccharyltransferase (OST) complex. OST exists in two different complex forms which contain common core subunits RPN1, RPN2, OST48, OST4, DAD1 and TMEM258, either STT3A or STT3B as catalytic subunits, and form-specific accessory subunits. OST can form stable complexes with the Sec61 complex or with both the Sec61 and TRAP complexes. The association of TUSC3 or MAGT1 with the STT3B-containing complex seems to be mutually exclusvice.

The protein resides in the cell membrane. It localises to the endoplasmic reticulum. It is found in the endoplasmic reticulum membrane. The protein operates within protein modification; protein glycosylation. Functionally, accessory component of the STT3B-containing form of the N-oligosaccharyl transferase (OST) complex which catalyzes the transfer of a high mannose oligosaccharide from a lipid-linked oligosaccharide donor to an asparagine residue within an Asn-X-Ser/Thr consensus motif in nascent polypeptide chains. Involved in N-glycosylation of STT3B-dependent substrates. Specifically required for the glycosylation of a subset of acceptor sites that are near cysteine residues; in this function seems to act redundantly with TUSC3. In its oxidized form proposed to form transient mixed disulfides with a glycoprotein substrate to facilitate access of STT3B to the unmodified acceptor site. Also has oxidoreductase-independent functions in the STT3B-containing OST complex possibly involving substrate recognition. Could indirectly play a role in Mg(2+) transport in epithelial cells. This is Dolichyl-diphosphooligosaccharide--protein glycosyltransferase subunit MAGT1 from Rattus norvegicus (Rat).